A 368-amino-acid polypeptide reads, in one-letter code: 3-isopropylmalate dehydrogenase (368 aa).

Residue 77–88 participates in NAD(+) binding; the sequence is GPKWGTGAVRPE. Residues R95, R105, R134, and D226 each coordinate substrate. Positions 226, 251, and 255 each coordinate Mg(2+). NAD(+) is bound at residue 290–301; it reads GSAPDLPANKVN.

This sequence belongs to the isocitrate and isopropylmalate dehydrogenases family. Homodimer. Mg(2+) is required as a cofactor. The cofactor is Mn(2+).

It is found in the cytoplasm. It catalyses the reaction (2R,3S)-3-isopropylmalate + NAD(+) = 4-methyl-2-oxopentanoate + CO2 + NADH. It functions in the pathway amino-acid biosynthesis; L-leucine biosynthesis; L-leucine from 3-methyl-2-oxobutanoate: step 3/4. Catalyzes the oxidation of 3-carboxy-2-hydroxy-4-methylpentanoate (3-isopropylmalate) to 3-carboxy-4-methyl-2-oxopentanoate. The product decarboxylates to 4-methyl-2 oxopentanoate. The sequence is that of 3-isopropylmalate dehydrogenase (LEU2) from Kodamaea ohmeri (Yeast).